We begin with the raw amino-acid sequence, 354 residues long: Protein sex-lethal (354 aa).

Residues M1 to Y21 form a disordered region. RRM domains follow at residues T125–P203 and T211–E291.

Part of a complex containing fl(2)d, Sxl and vir. Part of a complex composed of at least mei-P26, bam, bgcn and Sxl; this complex is involved in translational repression of nanos mRNA. interacts with mei-p26. Interacts with nito. Interacts with Unr; cooperates with Unr to prevent translation of msl-2 transcripts. Interacts with how; promoting nuclear retention of msl-2 transcripts. In terms of tissue distribution, expressed in somatic tissues, but not in the pole cells, which are the precursors of the germline. Expressed in the anterior of the germarium.

It is found in the nucleus. The protein resides in the cytoplasm. Its function is as follows. Sex determination switch protein, which controls sexual development and dosage compensation in females. Sxl protein is only active in females: it is inactive in males throughout development. Acts as a mRNA-binding protein, which specifically binds to a subset of pre-mRNAs and mRNAs and regulates their processing and/or translation. Binds nanos mRNA and is involved in bam-bgcn mediated repression of nanos mRNA translation. Promotes sexual development by controlling the female-specific alternative splicing of the transformer (tra) pre-mRNA: binds tightly to a characteristic uridine-rich polypyrimidine tract at the non-sex specific 3' splice site in one of the tra introns, preventing the general splicing factor U2AF from binding to this site and forcing it to bind to the female-specific 3' splice site. Acts as an inhibitor of dosage compensation in females by preventing production of msl-2 protein, an essential component of the MSL complex, the complex that mediates X-chromosome dosage compensation. Specifically binds to uridine stretches in both the 5'- and 3'-UTR of msl-2 transcripts. Sxl first acts at the splicing level by promoting retention of an intron in the 5' UTR of msl-2 pre-mRNA. The retained intron contains Sxl-binding sites that are required for subsequent steps of repression: after msl-2 mRNA export into the cytoplasm, Sxl coordinates its translational repression by targeting early steps of translation initiation. Together with how, Sxl also prevents production of msl-2 protein by preventing nuclear export of msl-2 transcripts. In terms of biological role, embryo-specific product, which is expressed early only in female embryos and specifies female-adult specific splicing. The chain is Protein sex-lethal from Drosophila melanogaster (Fruit fly).